We begin with the raw amino-acid sequence, 487 residues long: Schwannomin-interacting protein 1 (487 aa).

Disordered stretches follow at residues 1-74, 88-221, 236-260, and 308-354; these read MERS…VSAL, VIDE…PVPP, FREQ…NERE, and SGSD…SLDD. Residues 14 to 27 show a composition bias toward basic and acidic residues; sequence DQGKHSDSDYREDG. The span at 32–67 shows a compositional bias: low complexity; sequence SDAGSSSSSSRASSQSNSTKVTPCSECKSSSSPGGS. Acidic residues predominate over residues 92–106; it reads WAPEEDGEEEEEEDE. Basic and acidic residues-rich tracts occupy residues 107-123 and 153-162; these read RDQR…REPG and HQHDPQDLRH. Phosphoserine is present on Ser117. Over residues 242-255 the composition is skewed to polar residues; it reads RNQGQARTNSTSAQ. Residues 309–323 are compositionally biased toward basic and acidic residues; that stretch reads GSDKDSDADDSKTET. The segment covering 324 to 335 has biased composition (polar residues); sequence SLDTPLSPMSKQ. Acidic residues predominate over residues 344–354; the sequence is TTEEESESLDD. The stretch at 424–458 forms a coiled coil; it reads IGQLQVIVNDLHSQIESLNEELVQLLLIRDELHTE.

This sequence belongs to the SCHIP1 family. As to quaternary structure, homooligomer (via coiled coil domain). Interacts with NF2; the interaction is direct. Interacts with ANK3. As to expression, preferentially expressed in brain, skeletal muscles and heart. Also expressed in detected in pancreas, kidney, liver, lung, and placenta.

Its subcellular location is the cytoplasm. The polypeptide is Schwannomin-interacting protein 1 (Homo sapiens (Human)).